Reading from the N-terminus, the 178-residue chain is Probable chorismate pyruvate-lyase (178 aa).

Substrate contacts are provided by Arg-67, Leu-105, and Glu-164.

It belongs to the UbiC family.

The protein resides in the cytoplasm. It carries out the reaction chorismate = 4-hydroxybenzoate + pyruvate. The protein operates within cofactor biosynthesis; ubiquinone biosynthesis. Functionally, removes the pyruvyl group from chorismate, with concomitant aromatization of the ring, to provide 4-hydroxybenzoate (4HB) for the ubiquinone pathway. The chain is Probable chorismate pyruvate-lyase from Methylobacillus flagellatus (strain ATCC 51484 / DSM 6875 / VKM B-1610 / KT).